Here is a 391-residue protein sequence, read N- to C-terminus: Probable sugar efflux transporter (391 aa).

Helical transmembrane passes span 16-36 (VFVF…PVAL), 51-71 (VGLM…PLML), 82-102 (LLFL…AWNF), 110-130 (MGIA…VIRV), 138-158 (QALG…LPLG), 170-190 (TFGV…KLLP), 210-230 (PLLV…FTTY), 247-267 (ITTL…FLFG), 277-297 (FIAF…VFKN), 300-320 (WVIF…TIAL), 338-358 (IFSG…SIVI), and 361-381 (LGLE…LFWL).

Belongs to the major facilitator superfamily. SotB (TC 2.A.1.2) family.

It is found in the cell inner membrane. Its function is as follows. Involved in the efflux of sugars. The physiological role may be the reduction of the intracellular concentration of toxic sugars or sugar metabolites. This Helicobacter pylori (strain J99 / ATCC 700824) (Campylobacter pylori J99) protein is Probable sugar efflux transporter.